The primary structure comprises 88 residues: Small ribosomal subunit protein bS20 (88 aa).

It belongs to the bacterial ribosomal protein bS20 family.

In terms of biological role, binds directly to 16S ribosomal RNA. This chain is Small ribosomal subunit protein bS20, found in Methylorubrum populi (strain ATCC BAA-705 / NCIMB 13946 / BJ001) (Methylobacterium populi).